The primary structure comprises 169 residues: Protein UL138 (169 aa).

The helical transmembrane segment at valine 8–alanine 28 threads the bilayer. Residues aspartate 109–aspartate 133 form a disordered region.

As to quaternary structure, interacts with host TNFR1. Interacts with host MRP1. Interacts with host UAF1/WDR48. Interacts with host STING1.

It localises to the host Golgi apparatus membrane. In terms of biological role, plays an important role in the establishment of latent viral infection. Modulates the expression of several host cell surface receptors such as TNFR1, CD36 or the MRP1 transporter during productive infection. For instance, associates with host MRP1 and induces its lysosomal degradation. Plays an inhibitory role in the host cGAS/STING/TBK1 pathway and upstream of IRF3 phosphorylation and NF-kappa-B leading to inhibition of interferon beta production during both lytic and latent infections. Also participates in the establishment of latency by sustaining an innate immune response through phosphorylation and activation of host STAT1. The sequence is that of Protein UL138 (UL138) from Human cytomegalovirus (strain Merlin) (HHV-5).